We begin with the raw amino-acid sequence, 317 residues long: uncharacterized protein (317 aa).

This is an uncharacterized protein from Schizosaccharomyces pombe (strain 972 / ATCC 24843) (Fission yeast).